Reading from the N-terminus, the 455-residue chain is Adenylyltransferase and sulfurtransferase UBA4 (455 aa).

Residues glycine 93, aspartate 114, 121-125, lysine 138, and 182-183 contribute to the ATP site; these read SNLHR and DH. Zn(2+) contacts are provided by cysteine 224 and cysteine 227. The active-site Glycyl thioester intermediate; for adenylyltransferase activity is cysteine 241. Zn(2+) is bound by residues cysteine 302 and cysteine 305. Residues 355–453 form the Rhodanese domain; it reads QSREHTLIDV…WSEDIDAAFP (99 aa). The active-site Cysteine persulfide intermediate; for sulfurtransferase activity is cysteine 413.

It in the N-terminal section; belongs to the HesA/MoeB/ThiF family. UBA4 subfamily. It depends on Zn(2+) as a cofactor.

The protein resides in the cytoplasm. It is found in the cytosol. It functions in the pathway tRNA modification; 5-methoxycarbonylmethyl-2-thiouridine-tRNA biosynthesis. Plays a central role in 2-thiolation of mcm(5)S(2)U at tRNA wobble positions of cytosolic tRNA(Lys), tRNA(Glu) and tRNA(Gln). Acts by mediating the C-terminal thiocarboxylation of sulfur carrier URM1. Its N-terminus first activates URM1 as acyl-adenylate (-COAMP), then the persulfide sulfur on the catalytic cysteine is transferred to URM1 to form thiocarboxylation (-COSH) of its C-terminus. The reaction probably involves hydrogen sulfide that is generated from the persulfide intermediate and that acts as a nucleophile towards URM1. Subsequently, a transient disulfide bond is formed. Does not use thiosulfate as sulfur donor; NFS1 probably acting as a sulfur donor for thiocarboxylation reactions. Prior mcm(5) tRNA modification by the elongator complex is required for 2-thiolation. May also be involved in protein urmylation. The sequence is that of Adenylyltransferase and sulfurtransferase UBA4 from Lodderomyces elongisporus (strain ATCC 11503 / CBS 2605 / JCM 1781 / NBRC 1676 / NRRL YB-4239) (Yeast).